The primary structure comprises 146 residues: Globin-1 (146 aa).

In terms of domain architecture, Globin spans 9-146 (QLTADVKKDL…KLVAVVQAAL (138 aa)). His101 contacts heme b.

This sequence belongs to the globin family. In terms of assembly, homodimer.

It is found in the cytoplasm. The chain is Globin-1 from Anadara inaequivalvis (Inequivalve ark).